The chain runs to 336 residues: Dihydroorotate dehydrogenase (quinone) (336 aa).

Residues 62 to 66 and threonine 86 each bind FMN; that span reads AGLDK. Residue lysine 66 coordinates substrate. Residue 111 to 115 participates in substrate binding; that stretch reads NRFGF. 2 residues coordinate FMN: asparagine 139 and asparagine 172. Asparagine 172 provides a ligand contact to substrate. Serine 175 acts as the Nucleophile in catalysis. Asparagine 177 serves as a coordination point for substrate. FMN is bound by residues lysine 217 and threonine 245. Substrate is bound at residue 246–247; the sequence is NT. FMN contacts are provided by residues glycine 268, glycine 297, and 318 to 319; that span reads YS.

This sequence belongs to the dihydroorotate dehydrogenase family. Type 2 subfamily. As to quaternary structure, monomer. FMN serves as cofactor.

It localises to the cell membrane. The enzyme catalyses (S)-dihydroorotate + a quinone = orotate + a quinol. It functions in the pathway pyrimidine metabolism; UMP biosynthesis via de novo pathway; orotate from (S)-dihydroorotate (quinone route): step 1/1. Functionally, catalyzes the conversion of dihydroorotate to orotate with quinone as electron acceptor. The polypeptide is Dihydroorotate dehydrogenase (quinone) (Photobacterium profundum (strain SS9)).